The primary structure comprises 279 residues: MLFIELLKAIFFGVIEGVTEWLPISSTGHLILVQEFIRLHQDKAFMEMFNIVIQLGAIIAVIVIYFERLNPFQPGKSPQQIRLTWQLWLKVAIACIPSIIIAVPLDDWFEAHFNHMLPIAIALIVYGVAFLWIEKRHQTLEPRVVKLSRMSYKTAFFIGCFQVLSIIPGTSRSGATILGAIILGASRTVAADFTFFLAIPTMFGYSGLKALKFFIDGNHLTLSQLLVLLVASLTAFAVSLYVIKLLTDYVKKHDFTVFGRYRIVLGSLLIVYSVFKSLF.

The next 8 helical transmembrane spans lie at 2 to 22, 44 to 64, 85 to 105, 113 to 133, 163 to 183, 188 to 208, 225 to 245, and 255 to 275; these read LFIELLKAIFFGVIEGVTEWL, AFMEMFNIVIQLGAIIAVIVI, WQLWLKVAIACIPSIIIAVPL, FNHMLPIAIALIVYGVAFLWI, VLSIIPGTSRSGATILGAIIL, TVAADFTFFLAIPTMFGYSGL, LLVLLVASLTAFAVSLYVIKL, and FTVFGRYRIVLGSLLIVYSVF.

This sequence belongs to the UppP family.

Its subcellular location is the cell membrane. The enzyme catalyses di-trans,octa-cis-undecaprenyl diphosphate + H2O = di-trans,octa-cis-undecaprenyl phosphate + phosphate + H(+). Its function is as follows. Catalyzes the dephosphorylation of undecaprenyl diphosphate (UPP). Confers resistance to bacitracin. In Streptococcus equi subsp. zooepidemicus (strain H70), this protein is Undecaprenyl-diphosphatase.